The primary structure comprises 88 residues: Apolipoprotein C-I (88 aa).

The signal sequence occupies residues 1-26 (MRLFLSLPVLVVVLAMVLEGPAPAQA).

It belongs to the apolipoprotein C1 family.

It localises to the secreted. Functionally, inhibitor of lipoprotein binding to the low density lipoprotein (LDL) receptor, LDL receptor-related protein, and very low density lipoprotein (VLDL) receptor. Associates with high density lipoproteins (HDL) and the triacylglycerol-rich lipoproteins in the plasma and makes up about 10% of the protein of the VLDL and 2% of that of HDL. Appears to interfere directly with fatty acid uptake and is also the major plasma inhibitor of cholesteryl ester transfer protein (CETP). Binds free fatty acids and reduces their intracellular esterification. Modulates the interaction of APOE with beta-migrating VLDL and inhibits binding of beta-VLDL to the LDL receptor-related protein. In Ailurus fulgens (Himalayan red panda), this protein is Apolipoprotein C-I (APOC1).